We begin with the raw amino-acid sequence, 474 residues long: Phosphatidylserine synthase 2 (474 aa).

Over 1 to 62 (MLRSDVRRVA…DDGTNTFFWR (62 aa)) the chain is Lumenal. A helical transmembrane segment spans residues 63 to 83 (AHTLTVLFILTCSLGYVTLLE). Residues 84–96 (ETPQDTAYNAKRG) are Cytoplasmic-facing. Residues 97–117 (IIASILVFLCFGVTQAKDGPF) form a helical membrane-spanning segment. Over 118 to 126 (SRPHPAYWR) the chain is Lumenal. A helical transmembrane segment spans residues 127-147 (FWLCVSVVYELFLIFILFQTV). The Cytoplasmic portion of the chain corresponds to 148–313 (HDGRQFMKFI…EWKPASSLRR (166 aa)). The helical transmembrane segment at 314-334 (WLAVCGIIFVFLLAELNTFYL) threads the bilayer. Position 335 (Lys335) is a topological domain, lumenal. The chain crosses the membrane as a helical span at residues 336–356 (FVLWMPPEHYLVLLRLVFFVN). At 357–376 (VGGVAMREIYDFMDDLKFHK) the chain is on the cytoplasmic side. A helical transmembrane segment spans residues 377-397 (KLGQQAWMVAAITVTEFLIVV). Residues 398–403 (KYDPYT) are Lumenal-facing. A helical transmembrane segment spans residues 404–424 (ITLPLPFYVTQCWILGIVLVL). Residues 425–474 (TWTVWRFFIRDITLRYKEIRQQKQHRNEEEKSHRNGDVNSEKDTNKHKKH) lie on the Cytoplasmic side of the membrane. The span at 448–468 (QHRNEEEKSHRNGDVNSEKDT) shows a compositional bias: basic and acidic residues. Residues 448-474 (QHRNEEEKSHRNGDVNSEKDTNKHKKH) form a disordered region.

It belongs to the phosphatidyl serine synthase family.

The protein localises to the endoplasmic reticulum membrane. It carries out the reaction a 1,2-diacyl-sn-glycero-3-phosphoethanolamine + L-serine = a 1,2-diacyl-sn-glycero-3-phospho-L-serine + ethanolamine. The catalysed reaction is 1-hexadecanoyl-2-(9Z-octadecenoyl)-sn-glycero-3-phosphoethanolamine + L-serine = 1-hexadecanoyl-2-(9Z-octadecenoyl)-sn-glycero-3-phospho-L-serine + ethanolamine. It catalyses the reaction 1-hexadecanoyl-2-(4Z,7Z,10Z,13Z,16Z,19Z-docosahexaenoyl)-sn-glycero-3-phosphoethanolamine + L-serine = 1-hexadecanoyl-2-(4Z,7Z,10Z,13Z,16Z,19Z-docosahexaenoyl)-sn-glycero-3-phosphoserine + ethanolamine. The enzyme catalyses 1-octadecanoyl-2-(5Z,8Z,11Z,14Z)-eicosatetraenoyl-sn-glycero-3-phosphoethanolamine + L-serine = 1-octadecanoyl-2-(5Z,8Z,11Z,14Z)-eicosatetraenoyl-sn-glycero-3-phosphoserine + ethanolamine. It carries out the reaction 1-octadecanoyl-2-(4Z,7Z,10Z,13Z,16Z,19Z-docosahexaenoyl)-sn-glycero-3-phosphoethanolamine + L-serine = 1-octadecanoyl-2-(4Z,7Z,10Z,13Z,16Z,19Z-docosahexaenoyl)-sn-glycero-3-phosphoserine + ethanolamine. The catalysed reaction is 1-(1Z-octadecenyl)-2-(4Z,7Z,10Z,13Z,16Z,19Z-docosahexaenoyl)-sn-glycero-3-phosphoethanolamine + L-serine = 1-(1Z-octadecenyl)-2-(4Z,7Z,10Z,13Z,16Z,19Z-docosahexaenoyl)-sn-glycero-3-phospho-L-serine + ethanolamine. It catalyses the reaction 1-octadecanoyl-2-(9Z-octadecenoyl)-sn-glycero-3-phosphoethanolamine + L-serine = 1-octadecanoyl-2-(9Z-octadecenoyl)-sn-glycero-3-phospho-L-serine + ethanolamine. The enzyme catalyses 1-(1Z-octadecenyl)-2-(9Z-octadecenoyl)-sn-glycero-3-phosphoethanolamine + L-serine = 1-(1Z-octadecenyl)-2-(9Z-octadecenoyl)-sn-glycero-3-phospho-L-serine + ethanolamine. It carries out the reaction 1-(1Z-octadecenyl)-2-(5Z,8Z,11Z,14Z- eicosatetraenoyl)-sn-glycero-3-phosphoethanolamine + L-serine = 1-(1Z-octadecenyl)-2-(5Z,8Z,11Z,14Z-eicosatetraenoyl)-sn-glycero-3-phospho-L-serine + ethanolamine. It participates in phospholipid metabolism; phosphatidylserine biosynthesis. Functionally, catalyzes a base-exchange reaction in which the polar head group of phosphatidylethanolamine (PE) or phosphatidylcholine (PC) is replaced by L-serine. Catalyzes the conversion of phosphatatidylethanolamine and does not act on phosphatidylcholine. Can utilize both phosphatidylethanolamine (PE) plasmalogen and diacyl PE as substrate and the latter is six times better utilized, indicating the importance of an ester linkage at the sn-1 position. Although it shows no sn-1 fatty acyl preference, exhibits significant preference towards docosahexaenoic acid (22:6n-3) compared with 18:1 or 20:4 at the sn-2 position. The chain is Phosphatidylserine synthase 2 (ptdss2) from Xenopus tropicalis (Western clawed frog).